The primary structure comprises 163 residues: MAYSIPTPSQLVYFTENYADYIPFVNRLINARSNSFQTQSGRDELREILIKSQVSVVSPISRFPAEPAYYIYLRDPSISTVYTALLQSTDTRNRVIEVENSTNVTTAEQLNAVRRTDDASTAIHNNLEQLLSLLTNGTGVFNRTSFESASGLTWLVTTTPRTA.

Residue alanine 2 is modified to N-acetylalanine; by host.

It belongs to the virgaviridae capsid protein family.

The protein localises to the virion. Its function is as follows. Capsid protein self-assembles to form rod-shaped virions about 18 nm in diameter with a central canal enclosing the viral genomic RNA. This Sunn-hemp mosaic virus (SHMV) protein is Capsid protein (CP).